The chain runs to 273 residues: Large ribosomal subunit protein uL2 (273 aa).

Disordered regions lie at residues 34-54 (LEKKSKSGGRNNNGRITTRHI) and 223-273 (VAMN…RRRK).

This sequence belongs to the universal ribosomal protein uL2 family. As to quaternary structure, part of the 50S ribosomal subunit. Forms a bridge to the 30S subunit in the 70S ribosome.

In terms of biological role, one of the primary rRNA binding proteins. Required for association of the 30S and 50S subunits to form the 70S ribosome, for tRNA binding and peptide bond formation. It has been suggested to have peptidyltransferase activity; this is somewhat controversial. Makes several contacts with the 16S rRNA in the 70S ribosome. The chain is Large ribosomal subunit protein uL2 from Azotobacter vinelandii (strain DJ / ATCC BAA-1303).